A 440-amino-acid chain; its full sequence is MSERKQILNCIDDPQQALIMLKRISARTSLEVQENAISSVQNILTEVKQLGDEALFRLTEKFDGFIPKPLEITPEQTLEAWEKTPTPLQEALQLAKNRIEAFHKYQIPKDFLKEGIHGELLGKNWSPVEKAGIYIPGGRAAYPSTVLMNAVPALVAGVNEIIMVSPAGPNGQLNRTVLAAAYIAGIKKIFRIGGAQAIGALSYGTQTIPRVDVISGPGNLYVTLAKKLVYGQVGIDSLAGPSEVLIIADHSADVEQVATDLLAQAEHDPLAASILLTTESNLAKKINLEIENQLKDHPRSAICRKSLKDWGLIVICKDIKSCAALSNSFAPEHLELLIEKPFEFISQIKNAGAIFLGEWSPEATGDYLAGPNHTLPTSGTARFSSALSVETFMKSTSIINFNQAALNKTSAAIMELANSEGLHSHSRSIEIRRSKPSSDD.

NAD(+) contacts are provided by Tyr-134, Gln-196, and Asn-219. 3 residues coordinate substrate: Ser-242, Gln-264, and His-267. Zn(2+) contacts are provided by Gln-264 and His-267. Catalysis depends on proton acceptor residues Glu-332 and His-333. The substrate site is built by His-333, Asp-366, Glu-420, and His-425. Asp-366 contacts Zn(2+). A Zn(2+)-binding site is contributed by His-425.

It belongs to the histidinol dehydrogenase family. Requires Zn(2+) as cofactor.

The enzyme catalyses L-histidinol + 2 NAD(+) + H2O = L-histidine + 2 NADH + 3 H(+). The protein operates within amino-acid biosynthesis; L-histidine biosynthesis; L-histidine from 5-phospho-alpha-D-ribose 1-diphosphate: step 9/9. In terms of biological role, catalyzes the sequential NAD-dependent oxidations of L-histidinol to L-histidinaldehyde and then to L-histidine. The sequence is that of Histidinol dehydrogenase from Prochlorococcus marinus (strain SARG / CCMP1375 / SS120).